A 137-amino-acid chain; its full sequence is Cofilin-1A (137 aa).

The region spanning S2–T135 is the ADF-H domain.

Belongs to the actin-binding proteins ADF family.

It localises to the nucleus matrix. The protein resides in the cytoplasm. The protein localises to the cytoskeleton. Its function is as follows. Controls reversibly actin polymerization and depolymerization in a pH-sensitive manner. It has the ability to bind G- and F-actin in a 1:1 ratio of cofilin to actin. It is the major component of intranuclear and cytoplasmic actin rods. The sequence is that of Cofilin-1A (cofA) from Dictyostelium discoideum (Social amoeba).